Reading from the N-terminus, the 186-residue chain is ADP-ribosylation factor-like protein 8B (186 aa).

An intramembrane region (note=Mediates targeting to membranes) is located at residues methionine 1–glutamate 19. GTP contacts are provided by residues glutamine 29–threonine 35, aspartate 71–glutamine 75, and asparagine 130–aspartate 133. Lysine 141 is covalently cross-linked (Glycyl lysine isopeptide (Lys-Gly) (interchain with G-Cter in ubiquitin)).

The protein belongs to the small GTPase superfamily. Arf family. As to quaternary structure, interacts with tubulin. Interacts with BORCS5; recruits ARL8B to lysosomes. Interacts with VPS41; the interaction mediates the recruitment of the HOPS complex to lysosomes. Interacts (GTP-bound form) with PLEKHM2 (via RUN domain); the interaction is required to recruit the motor protein kinesin-1 on lysosomes. Interacts (GTP-bound form) with PLEKHM1 (via RUN domain); the interaction is required for PLEKHM1 localization to lysosomes and for ARL8B function in delivery and degradation of endocytic and autophagic cargo in lysosomes. PLEKHM1 and PLEKHM2 compete for interaction with ARL8B. Interacts (GTP-bound form) with RUFY1; the interaction is required for RUFY1 endosomal location. When GTP-bound, interacts with RUFY3 and RUFY4, but not with RUFY1, nor RUFY2. Post-translationally, ubiquitinated at Lys-141 by RNF167, leading to its degradation.

It localises to the late endosome membrane. Its subcellular location is the lysosome membrane. The protein resides in the cytoplasm. It is found in the cytoskeleton. The protein localises to the spindle. It localises to the cell projection. Its subcellular location is the axon. The protein resides in the synapse. It is found in the cytolytic granule membrane. The protein localises to the early endosome membrane. The catalysed reaction is GTP + H2O = GDP + phosphate + H(+). Functionally, small GTPase which cycles between active GTP-bound and inactive GDP-bound states. In its active state, binds to a variety of effector proteins playing a key role in the regulation of lysosomal positioning which is important for nutrient sensing, natural killer cell-mediated cytotoxicity and antigen presentation. Along with its effectors, orchestrates lysosomal transport and fusion. Localizes specifically to lysosomal membranes and mediates anterograde lysosomal motility by recruiting PLEKHM2, which in turn recruits the motor protein kinesin-1 on lysosomes. Required for lysosomal and cytolytic granule exocytosis. Critical factor involved in NK cell-mediated cytotoxicity. Drives the polarization of cytolytic granules and microtubule-organizing centers (MTOCs) toward the immune synapse between effector NK lymphocytes and target cells. In neurons, mediates the anterograde axonal long-range transport of presynaptic lysosome-related vesicles required for presynaptic biogenesis and synaptic function. Also acts as a regulator of endosome to lysosome trafficking pathways of special significance for host defense. Recruits RUFY1 onto early endosomes regulating endosomes to trans-Golgi network proteins retrieval. Regulates cargo trafficking to lysosomes by binding to PLEKHM1 and recruiting the HOPS subunit VPS41, resulting in functional assembly of the HOPS complex on lysosomal membranes. Plays an important role in cargo delivery to lysosomes for antigen presentation and microbial killing. Directs the intersection of CD1d with lipid antigens in lysosomes, and plays a role in intersecting phagosomes with lysosomes to generate phagolysosomes that kill microbes. Involved in the process of MHC II presentation. Regulates the delivery of antigens to lysosomes and the formation of MHC II-peptide complexes through the recruitment of the HOPS complex to lysosomes allowing the fusion of late endosomes to lysosomes. May play a role in chromosome segregation. This Bos taurus (Bovine) protein is ADP-ribosylation factor-like protein 8B (ARL8B).